The following is a 140-amino-acid chain: Type II secretion system core protein G (140 aa).

Residues 1 to 6 constitute a propeptide, leader sequence; the sequence is MQRQRG. Phe7 is modified (N-methylphenylalanine). Residues 7 to 27 traverse the membrane as a helical segment; sequence FTLLEIMVVIVILGVLASLVV. The interval 120–140 is disordered; sequence LGPDGVPESNDDIGNWTIGKK.

The protein belongs to the GSP G family. As to quaternary structure, type II secretion system is composed of four main components: the outer membrane complex, the inner membrane complex, the cytoplasmic secretion ATPase and the periplasm-spanning pseudopilus. Forms homomultimers. Post-translationally, cleaved by the prepilin peptidase. Methylated by prepilin peptidase at the amino group of the N-terminal phenylalanine once the leader sequence is cleaved.

It localises to the cell inner membrane. Its function is as follows. Core component of the type II secretion system required for the energy-dependent secretion of extracellular factors such as proteases and toxins from the periplasm. Pseudopilin (pilin-like) protein that polymerizes to form the pseudopilus. Further polymerization triggers pseudopilus growth. This Klebsiella pneumoniae protein is Type II secretion system core protein G (pulG).